A 77-amino-acid polypeptide reads, in one-letter code: MSLEDDVKSIIVEQLGVDASEVNENSSFIEDLNADSLDLTELIMTLEEKFNFEISEQDAEQLRTVGDVITYIKTRQG.

One can recognise a Carrier domain in the interval 1–76 (MSLEDDVKSI…DVITYIKTRQ (76 aa)). O-(pantetheine 4'-phosphoryl)serine is present on Ser-36.

The protein belongs to the acyl carrier protein (ACP) family. Post-translationally, 4'-phosphopantetheine is transferred from CoA to a specific serine of apo-ACP by AcpS. This modification is essential for activity because fatty acids are bound in thioester linkage to the sulfhydryl of the prosthetic group.

It localises to the cytoplasm. It participates in lipid metabolism; fatty acid biosynthesis. Carrier of the growing fatty acid chain in fatty acid biosynthesis. This is Acyl carrier protein from Chlamydia caviae (strain ATCC VR-813 / DSM 19441 / 03DC25 / GPIC) (Chlamydophila caviae).